Reading from the N-terminus, the 507-residue chain is Cell cycle serine/threonine-protein kinase hsk1 (507 aa).

S22 carries the post-translational modification Phosphoserine. The 366-residue stretch at 68-433 (YRLIEKIGEG…AEEALDHDFL (366 aa)) folds into the Protein kinase domain. Residues 74-82 (IGEGTFSSV) and K129 each bind ATP. The Proton acceptor role is filled by D216. Position 291 is a phosphothreonine (T291). The interval 475-507 (FKEQEETDEPTSLSKRKRSIDEILPNDALQDGA) is disordered. At S493 the chain carries Phosphoserine.

This sequence belongs to the protein kinase superfamily. Ser/Thr protein kinase family. CDC7 subfamily. Heterodimer with the regulatory subunit him1/dfp1. May form homooligomeric complexes. Interacts with mcm10. In terms of processing, autophosphorylated. Phosphorylated by cds1 in vitro.

The protein resides in the nucleus. It catalyses the reaction L-seryl-[protein] + ATP = O-phospho-L-seryl-[protein] + ADP + H(+). The catalysed reaction is L-threonyl-[protein] + ATP = O-phospho-L-threonyl-[protein] + ADP + H(+). Phosphorylation of exogenous substrates activated by Dfp1. In terms of biological role, required for G1/S transition. Plays a role in DNA replication checkpoint signaling through regulating rad3 and cds1. Involved in the maintenance of mitotic chromosome structures during S phase through regulating the function of rad21. Required for initiation of mitotic DNA replication through phosphorylating mcm2/cdc19. Required for genome integrity. The polypeptide is Cell cycle serine/threonine-protein kinase hsk1 (hsk1) (Schizosaccharomyces pombe (strain 972 / ATCC 24843) (Fission yeast)).